Consider the following 803-residue polypeptide: Leucine--tRNA ligase (803 aa).

The 'HIGH' region motif lies at 40–51 (PYPSGAGLHVGH). Positions 575–579 (KMSKS) match the 'KMSKS' region motif. Lys578 contributes to the ATP binding site.

It belongs to the class-I aminoacyl-tRNA synthetase family.

The protein localises to the cytoplasm. It catalyses the reaction tRNA(Leu) + L-leucine + ATP = L-leucyl-tRNA(Leu) + AMP + diphosphate. The sequence is that of Leucine--tRNA ligase from Listeria innocua serovar 6a (strain ATCC BAA-680 / CLIP 11262).